A 338-amino-acid chain; its full sequence is Heme-dependent oxidative N-demethylase alpha subunit (338 aa).

Heme b contacts are provided by Tyr-38 and His-194. The Proton donor role is filled by Arg-224. Asn-226 contributes to the heme b binding site. Glu-266 lines the dimethylamine pocket. Heme b is bound by residues Tyr-317 and Lys-318.

In terms of assembly, the heme-dependent oxidative N-demethylase (HODM) is a heterotetramer composed of a catalytic alpha subunit, a FMN/2Fe-2S-dependent oxidoreductase beta subunit, a gamma subunit with putative aminotransferase activity, and a delta subunit of unknown function.

The catalysed reaction is dimethylamine + NADPH + O2 + H(+) = methylamine + formaldehyde + NADP(+) + H2O. Functionally, component of the heme-dependent oxidative N-demethylase (HODM) enzyme, that catalyzes the NADPH-dependent oxidation of dimethylamine (DMA) to methylamine (MA) and formaldehyde. Functions in bacterial methylated amine catabolism, linking alkylamine oxidation to the tetrahydrofolate C1 pool. The alpha subunit of HODM binds heme, oxygen and DMA, and serves as the site of the oxidative N-demethylase activity. The polypeptide is Heme-dependent oxidative N-demethylase alpha subunit (Ectopseudomonas mendocina (strain ymp) (Pseudomonas mendocina)).